Here is a 313-residue protein sequence, read N- to C-terminus: Porphobilinogen deaminase (313 aa).

An S-(dipyrrolylmethanemethyl)cysteine modification is found at Cys242.

Belongs to the HMBS family. In terms of assembly, monomer. Dipyrromethane is required as a cofactor.

It carries out the reaction 4 porphobilinogen + H2O = hydroxymethylbilane + 4 NH4(+). The protein operates within porphyrin-containing compound metabolism; protoporphyrin-IX biosynthesis; coproporphyrinogen-III from 5-aminolevulinate: step 2/4. In terms of biological role, tetrapolymerization of the monopyrrole PBG into the hydroxymethylbilane pre-uroporphyrinogen in several discrete steps. This chain is Porphobilinogen deaminase, found in Yersinia pseudotuberculosis serotype O:1b (strain IP 31758).